A 302-amino-acid polypeptide reads, in one-letter code: Putative fructose-bisphosphate aldolase (302 aa).

Residue Asp-86 is the Proton donor of the active site. Zn(2+)-binding residues include His-87, Asp-116, Glu-146, and His-192. Gly-193 contributes to the dihydroxyacetone phosphate binding site. His-223 contributes to the Zn(2+) binding site. Residues 224 to 226 and 245 to 248 each bind dihydroxyacetone phosphate; these read GAD and NVNR.

Belongs to the class II fructose-bisphosphate aldolase family. In terms of assembly, homodimer. Requires Zn(2+) as cofactor.

It catalyses the reaction beta-D-fructose 1,6-bisphosphate = D-glyceraldehyde 3-phosphate + dihydroxyacetone phosphate. The protein operates within carbohydrate degradation; glycolysis; D-glyceraldehyde 3-phosphate and glycerone phosphate from D-glucose: step 4/4. Its function is as follows. Catalyzes the aldol condensation of dihydroxyacetone phosphate (DHAP or glycerone-phosphate) with glyceraldehyde 3-phosphate (G3P) to form fructose 1,6-bisphosphate (FBP) in gluconeogenesis and the reverse reaction in glycolysis. In Coccidioides immitis (strain RS) (Valley fever fungus), this protein is Putative fructose-bisphosphate aldolase.